Reading from the N-terminus, the 365-residue chain is Isopentenyl-diphosphate delta-isomerase (365 aa).

Substrate is bound at residue 8 to 9 (RK). Residues 67–69 (SIT), serine 97, and asparagine 126 contribute to the FMN site. 97–99 (SQR) provides a ligand contact to substrate. Glutamine 160 provides a ligand contact to substrate. Glutamate 161 contacts Mg(2+). FMN-binding positions include lysine 192, threonine 222, 272–274 (GVR), and 293–294 (AL).

It belongs to the IPP isomerase type 2 family. As to quaternary structure, homooctamer. Dimer of tetramers. FMN is required as a cofactor. The cofactor is NADPH. Requires Mg(2+) as cofactor.

The protein resides in the cytoplasm. It catalyses the reaction isopentenyl diphosphate = dimethylallyl diphosphate. Functionally, involved in the biosynthesis of isoprenoids. Catalyzes the 1,3-allylic rearrangement of the homoallylic substrate isopentenyl (IPP) to its allylic isomer, dimethylallyl diphosphate (DMAPP). The polypeptide is Isopentenyl-diphosphate delta-isomerase (Methanosarcina acetivorans (strain ATCC 35395 / DSM 2834 / JCM 12185 / C2A)).